Here is a 293-residue protein sequence, read N- to C-terminus: Pantothenate synthetase (293 aa).

38–45 (MGALHEGH) contributes to the ATP binding site. His45 acts as the Proton donor in catalysis. (R)-pantoate is bound at residue Gln69. Beta-alanine is bound at residue Gln69. Residue 155 to 158 (GEKD) participates in ATP binding. Gln161 serves as a coordination point for (R)-pantoate. 192 to 195 (QSSR) provides a ligand contact to ATP.

This sequence belongs to the pantothenate synthetase family. As to quaternary structure, homodimer.

It is found in the cytoplasm. It catalyses the reaction (R)-pantoate + beta-alanine + ATP = (R)-pantothenate + AMP + diphosphate + H(+). It functions in the pathway cofactor biosynthesis; (R)-pantothenate biosynthesis; (R)-pantothenate from (R)-pantoate and beta-alanine: step 1/1. Catalyzes the condensation of pantoate with beta-alanine in an ATP-dependent reaction via a pantoyl-adenylate intermediate. The protein is Pantothenate synthetase of Hyphomonas neptunium (strain ATCC 15444).